We begin with the raw amino-acid sequence, 414 residues long: tRNA methyltransferase 10 homolog C (414 aa).

A mitochondrion-targeting transit peptide spans 1 to 35 (MNVTVRFLRPFARYLVPYTFHRTRSNSYSRVLQRY). S79 bears the Phosphoserine mark. Positions 133–162 (GKEMMKKAKQMKKEMKAAAREEAKRARSLE) form a coiled coil. The SAM-dependent MTase TRM10-type domain occupies 186-378 (LGWKGVQAMQ…KFVPRRKHTG (193 aa)).

It belongs to the class IV-like SAM-binding methyltransferase superfamily. TRM10 family. As to quaternary structure, component of mitochondrial ribonuclease P, a complex composed of TRMT10C/MRPP1, HSD17B10/MRPP2 and PRORP/MRPP3. Interacts with HSD17B10/MRPP2; forming the MRPP1-MRPP2 subcomplex of the mitochondrial ribonuclease P complex. Interacts with GRSF1.

It localises to the mitochondrion matrix. The protein resides in the mitochondrion nucleoid. It carries out the reaction adenosine(9) in tRNA + S-adenosyl-L-methionine = N(1)-methyladenosine(9) in tRNA + S-adenosyl-L-homocysteine + H(+). The enzyme catalyses guanosine(9) in tRNA + S-adenosyl-L-methionine = N(1)-methylguanosine(9) in tRNA + S-adenosyl-L-homocysteine + H(+). The catalysed reaction is an adenosine in mRNA + S-adenosyl-L-methionine = an N(1)-methyladenosine in mRNA + S-adenosyl-L-homocysteine + H(+). Functionally, mitochondrial tRNA N(1)-methyltransferase involved in mitochondrial tRNA maturation. Component of mitochondrial ribonuclease P, a complex composed of TRMT10C/MRPP1, HSD17B10/MRPP2 and PRORP/MRPP3, which cleaves tRNA molecules in their 5'-ends. Together with HSD17B10/MRPP2, forms a subcomplex of the mitochondrial ribonuclease P, named MRPP1-MRPP2 subcomplex, which displays functions that are independent of the ribonuclease P activity. The MRPP1-MRPP2 subcomplex catalyzes the formation of N(1)-methylguanine and N(1)-methyladenine at position 9 (m1G9 and m1A9, respectively) in tRNAs; TRMT10C/MRPP1 acting as the catalytic N(1)-methyltransferase subunit. The MRPP1-MRPP2 subcomplex also acts as a tRNA maturation platform: following 5'-end cleavage by the mitochondrial ribonuclease P complex, the MRPP1-MRPP2 subcomplex enhances the efficiency of 3'-processing catalyzed by ELAC2, retains the tRNA product after ELAC2 processing and presents the nascent tRNA to the mitochondrial CCA tRNA nucleotidyltransferase TRNT1 enzyme. In addition to tRNA N(1)-methyltransferase activity, TRMT10C/MRPP1 also acts as a mRNA N(1)-methyltransferase by mediating methylation of adenosine residues at the N(1) position of MT-ND5 mRNA. Associates with mitochondrial DNA complexes at the nucleoids to initiate RNA processing and ribosome assembly. The protein is tRNA methyltransferase 10 homolog C of Rattus norvegicus (Rat).